The sequence spans 366 residues: tRNA/tmRNA (uracil-C(5))-methyltransferase (366 aa).

Gln-190, Tyr-218, Asn-223, Glu-239, and Asp-299 together coordinate S-adenosyl-L-methionine. Cys-324 serves as the catalytic Nucleophile. The active-site Proton acceptor is Glu-358.

The protein belongs to the class I-like SAM-binding methyltransferase superfamily. RNA M5U methyltransferase family. TrmA subfamily.

It catalyses the reaction uridine(54) in tRNA + S-adenosyl-L-methionine = 5-methyluridine(54) in tRNA + S-adenosyl-L-homocysteine + H(+). The enzyme catalyses uridine(341) in tmRNA + S-adenosyl-L-methionine = 5-methyluridine(341) in tmRNA + S-adenosyl-L-homocysteine + H(+). In terms of biological role, dual-specificity methyltransferase that catalyzes the formation of 5-methyluridine at position 54 (m5U54) in all tRNAs, and that of position 341 (m5U341) in tmRNA (transfer-mRNA). This Shigella boydii serotype 18 (strain CDC 3083-94 / BS512) protein is tRNA/tmRNA (uracil-C(5))-methyltransferase.